A 314-amino-acid chain; its full sequence is Mycothiol acetyltransferase (314 aa).

Glutamate 39 serves as a coordination point for 1D-myo-inositol 2-(L-cysteinylamino)-2-deoxy-alpha-D-glucopyranoside. 80–82 contacts acetyl-CoA; it reads LTA. The N-acetyltransferase domain maps to 159–313; it reads FVCRRFDPIS…PTGELGHEPP (155 aa). 1D-myo-inositol 2-(L-cysteinylamino)-2-deoxy-alpha-D-glucopyranoside-binding residues include glutamate 186, lysine 228, and glutamate 237. Acetyl-CoA contacts are provided by residues 241–243 and 248–254; these read LGV and QGQGVGR. Tyrosine 275 serves as a coordination point for 1D-myo-inositol 2-(L-cysteinylamino)-2-deoxy-alpha-D-glucopyranoside.

Belongs to the acetyltransferase family. MshD subfamily. As to quaternary structure, monomer.

The enzyme catalyses 1D-myo-inositol 2-(L-cysteinylamino)-2-deoxy-alpha-D-glucopyranoside + acetyl-CoA = mycothiol + CoA + H(+). Catalyzes the transfer of acetyl from acetyl-CoA to desacetylmycothiol (Cys-GlcN-Ins) to form mycothiol. The sequence is that of Mycothiol acetyltransferase from Jonesia denitrificans (strain ATCC 14870 / DSM 20603 / BCRC 15368 / CIP 55.134 / JCM 11481 / NBRC 15587 / NCTC 10816 / Prevot 55134) (Listeria denitrificans).